An 822-amino-acid chain; its full sequence is A disintegrin and metallopeptidase domain 3 (822 aa).

Residues 1–16 (MLPLFLVLSYLGQVIA) form the signal peptide. The Peptidase M12B domain maps to 187-384 (RILRIKIIMD…PELDCLRNTS (198 aa)). 7 disulfides stabilise this stretch: cysteine 296-cysteine 379, cysteine 338-cysteine 363, cysteine 340-cysteine 345, cysteine 456-cysteine 476, cysteine 623-cysteine 635, cysteine 629-cysteine 641, and cysteine 643-cysteine 652. A Disintegrin domain is found at 395 to 484 (GSYCGNHLLE…GCAPDTKAAD (90 aa)). In terms of domain architecture, EGF-like spans 619–653 (GTRECEADDKCQGHGICNNLNNCQCESGFAPPECD). The chain crosses the membrane as a helical span at residues 689 to 709 (VLLISFYILLPFLVVLAFMAV).

In terms of assembly, interacts with LY6K. Interacts with TEX101. In terms of processing, initially synthesized as a 110-kDa precursor in round spermatids, and the precursor is then processed into a 42-kDa mature protein during the sperm transport into and/or once in the epididymis. As to expression, expressed in sperm (at protein level).

The protein localises to the cell membrane. Its function is as follows. Involved in fertilization by controlling sperm migration into the oviduct. Promotes the binding of sperm to the oocyte zona pellucida. In Mus musculus (Mouse), this protein is A disintegrin and metallopeptidase domain 3.